The chain runs to 306 residues: ATP synthase gamma chain (306 aa).

Belongs to the ATPase gamma chain family. As to quaternary structure, F-type ATPases have 2 components, CF(1) - the catalytic core - and CF(0) - the membrane proton channel. CF(1) has five subunits: alpha(3), beta(3), gamma(1), delta(1), epsilon(1). CF(0) has three main subunits: a, b and c.

It is found in the cell membrane. In terms of biological role, produces ATP from ADP in the presence of a proton gradient across the membrane. The gamma chain is believed to be important in regulating ATPase activity and the flow of protons through the CF(0) complex. The protein is ATP synthase gamma chain of Bifidobacterium adolescentis (strain ATCC 15703 / DSM 20083 / NCTC 11814 / E194a).